The following is a 297-amino-acid chain: MLTGLKIAVIGGDARQLEIIRKLTEQQADIYLVGFDQLDHGFTGAVKCNIDEIPFQQIDSIILPVSATTGEGVVSTVFSNEEVVLKQDHLDRTPAHCVIFSGISNAYLENIAAQAKRKLVKLFERDDIAIYNSIPTVEGTIMLAIQHTDYTIHGSQVAVLGLGRTGMTIARTFAALGANVKVGARSSAHLARITEMGLVPFHTDELKEHVKDIDICINTIPSMILNQTVLSSMTPKTLILDLASRPGGTDFKYAEKQGIKALLAPGLPGIVAPKTAGQILANVLSKLLAEIQAEEGK.

NADP(+) is bound by residues 164-165, Arg-185, Thr-203, 242-244, and 264-267; these read RT, LAS, and APGL.

In terms of assembly, dipicolinate synthase likely consists of DpaA and DpaB, since both proteins are required for DPA synthesis.

It carries out the reaction (S)-2,3-dihydrodipicolinate + NADP(+) = dipicolinate + NADPH + H(+). In terms of biological role, together with DpaB, catalyzes the conversion of dihydrodipicolinate to dipicolinate (DPA), which constitutes up to 10% of the dry weight of the spore. This is Dipicolinate synthase subunit A (dpaA) from Bacillus subtilis (strain 168).